The sequence spans 658 residues: Threonine--tRNA ligase (658 aa).

The region spanning 1-64 (MSNTVSLQFP…GASGKVEIIT (64 aa)) is the TGS domain. The interval 246–548 (DHRRLGREMD…LIENFAGHMP (303 aa)) is catalytic. The Zn(2+) site is built by C343, H394, and H525.

Belongs to the class-II aminoacyl-tRNA synthetase family. In terms of assembly, homodimer. Zn(2+) serves as cofactor.

The protein resides in the cytoplasm. The catalysed reaction is tRNA(Thr) + L-threonine + ATP = L-threonyl-tRNA(Thr) + AMP + diphosphate + H(+). Its function is as follows. Catalyzes the attachment of threonine to tRNA(Thr) in a two-step reaction: L-threonine is first activated by ATP to form Thr-AMP and then transferred to the acceptor end of tRNA(Thr). Also edits incorrectly charged L-seryl-tRNA(Thr). The polypeptide is Threonine--tRNA ligase (Brucella canis (strain ATCC 23365 / NCTC 10854 / RM-666)).